Consider the following 598-residue polypeptide: Aspartate--tRNA ligase (598 aa).

Glu182 lines the L-aspartate pocket. The segment at 206-209 (QLFK) is aspartate. Arg228 contributes to the L-aspartate binding site. Residues 228–230 (RDE) and Gln237 each bind ATP. L-aspartate is bound at residue His456. Glu490 contacts ATP. Arg497 is an L-aspartate binding site. 542 to 545 (GVDR) contributes to the ATP binding site.

This sequence belongs to the class-II aminoacyl-tRNA synthetase family. Type 1 subfamily. As to quaternary structure, homodimer.

It is found in the cytoplasm. It carries out the reaction tRNA(Asp) + L-aspartate + ATP = L-aspartyl-tRNA(Asp) + AMP + diphosphate. Catalyzes the attachment of L-aspartate to tRNA(Asp) in a two-step reaction: L-aspartate is first activated by ATP to form Asp-AMP and then transferred to the acceptor end of tRNA(Asp). This Agathobacter rectalis (strain ATCC 33656 / DSM 3377 / JCM 17463 / KCTC 5835 / VPI 0990) (Eubacterium rectale) protein is Aspartate--tRNA ligase.